Reading from the N-terminus, the 128-residue chain is Glycine cleavage system H protein (128 aa).

The Lipoyl-binding domain occupies 24–106; it reads LVRIGISEFA…HGEGWLLIIR (83 aa). Residue lysine 65 is modified to N6-lipoyllysine.

The protein belongs to the GcvH family. As to quaternary structure, the glycine cleavage system is composed of four proteins: P, T, L and H. (R)-lipoate serves as cofactor.

In terms of biological role, the glycine cleavage system catalyzes the degradation of glycine. The H protein shuttles the methylamine group of glycine from the P protein to the T protein. The sequence is that of Glycine cleavage system H protein from Prochlorococcus marinus (strain NATL2A).